The primary structure comprises 215 residues: Cytochrome b6 (215 aa).

Residues 32 to 52 traverse the membrane as a helical segment; sequence IFYCLGGITLTCFLVQVATGF. C35 provides a ligand contact to heme c. Residues H86 and H100 each contribute to the heme b site. 3 consecutive transmembrane segments (helical) span residues 90–110, 116–136, and 186–206; these read ASMMVLMMILHVFRVYLTGGF, LTWVTGVILAVLTVSFGVTGY, and LHTFILPLLTAVFMPMHFLMI. The heme b site is built by H187 and H202.

Belongs to the cytochrome b family. PetB subfamily. As to quaternary structure, the 4 large subunits of the cytochrome b6-f complex are cytochrome b6, subunit IV (17 kDa polypeptide, PetD), cytochrome f and the Rieske protein, while the 4 small subunits are PetG, PetL, PetM and PetN. The complex functions as a dimer. Requires heme b as cofactor. Heme c is required as a cofactor.

It localises to the plastid. It is found in the chloroplast thylakoid membrane. Component of the cytochrome b6-f complex, which mediates electron transfer between photosystem II (PSII) and photosystem I (PSI), cyclic electron flow around PSI, and state transitions. This Pinus thunbergii (Japanese black pine) protein is Cytochrome b6.